Here is a 208-residue protein sequence, read N- to C-terminus: Putative 3-methyladenine DNA glycosylase (208 aa).

It belongs to the DNA glycosylase MPG family.

This is Putative 3-methyladenine DNA glycosylase from Prosthecochloris aestuarii (strain DSM 271 / SK 413).